A 165-amino-acid chain; its full sequence is Urease accessory protein UreE (165 aa).

The interval 137-156 (EAGAYQSAPHGHSHAHGHDH) is disordered.

It belongs to the UreE family.

It is found in the cytoplasm. Its function is as follows. Involved in urease metallocenter assembly. Binds nickel. Probably functions as a nickel donor during metallocenter assembly. The protein is Urease accessory protein UreE of Pseudomonas putida (strain GB-1).